A 97-amino-acid polypeptide reads, in one-letter code: Small ribosomal subunit protein bS20 (97 aa).

It belongs to the bacterial ribosomal protein bS20 family.

Functionally, binds directly to 16S ribosomal RNA. The protein is Small ribosomal subunit protein bS20 of Prochlorococcus marinus subsp. pastoris (strain CCMP1986 / NIES-2087 / MED4).